The sequence spans 383 residues: MDPNPFIYCTCCDCCKLGQPKLIKTPYPLPKHPTGKFKPVLPPPISKEHNSLLSQPGKSTVSPRDKVQSGNTESSKAPSEVIQVSPGYTLIRNREQISVTLGDEMFNRKKHLESDVLSKVKFSRTDIISDLQEQIAELMAIIEQMNRDQQSALKLLSKDLDLRCSNMKQKFETESRELKETHREELERLENNYKEALKAEKALAEEKLDKMSKEYKYLKSMFHVFQDSIYEEMEDKWLRRKAEWEKDEKMEREKILLQQKCRIIKKFELQSEEKKKKMNESISAVSDNFAREKEELLRQHDEDILQIQELRKSKEILEAELRAQATVLETLNTNLFQCQKELERQKTIAANLEKLFQTKLAEAEEKHKYNIKTPTEENNCLRC.

The interval 26 to 79 is disordered; that stretch reads PYPLPKHPTGKFKPVLPPPISKEHNSLLSQPGKSTVSPRDKVQSGNTESSKAPS. Polar residues predominate over residues 51 to 77; that stretch reads SLLSQPGKSTVSPRDKVQSGNTESSKA. Coiled coils occupy residues 125-220 and 276-359; these read TDII…YLKS and KKMN…FQTK. The residue at position 354 (Lys-354) is an N6-acetyllysine.

As to expression, isoform 1 is specific to germ cells of the testis and localizes to the principal piece of the sperm flagellum. Isoform 2 seems to be expressed mainly in somatic cells of the testis, and is not detected in mature spermatozoa (at protein level). Isoform 2 may also be expressed weakly in brain.

The protein resides in the cytoplasm. The protein localises to the cytoplasmic granule. Its subcellular location is the cell projection. It localises to the cilium. It is found in the flagellum. This chain is Flagellum-associated coiled-coil domain-containing protein 1, found in Mus musculus (Mouse).